A 161-amino-acid polypeptide reads, in one-letter code: MPKEVIVESFELDHTIVKAPYVRLISEEFGPKGDVITNFDVRLVQPNQAAIETAGLHTIEHLLAKLIRQRIDGMIDCSPFGCRTGFHLIMWGKHSSTDIAKVITSSLEEIATGITWEDVPGTTIESCGNYKDHSLFAAKEWAQLILKQGISDDPFNRHVTS.

Fe cation contacts are provided by H57, H61, and C127.

Belongs to the LuxS family. Homodimer. Fe cation is required as a cofactor.

The enzyme catalyses S-(5-deoxy-D-ribos-5-yl)-L-homocysteine = (S)-4,5-dihydroxypentane-2,3-dione + L-homocysteine. Involved in the synthesis of autoinducer 2 (AI-2) which is secreted by bacteria and is used to communicate both the cell density and the metabolic potential of the environment. The regulation of gene expression in response to changes in cell density is called quorum sensing. Catalyzes the transformation of S-ribosylhomocysteine (RHC) to homocysteine (HC) and 4,5-dihydroxy-2,3-pentadione (DPD). The protein is S-ribosylhomocysteine lyase of Streptococcus equi subsp. zooepidemicus (strain H70).